Consider the following 428-residue polypeptide: Serine--tRNA ligase (428 aa).

Residue 235 to 237 (TAE) participates in L-serine binding. 266 to 268 (RSE) contacts ATP. L-serine is bound at residue Glu-289. Residue 353 to 356 (EISS) participates in ATP binding. Residue Ser-389 coordinates L-serine.

Belongs to the class-II aminoacyl-tRNA synthetase family. Type-1 seryl-tRNA synthetase subfamily. As to quaternary structure, homodimer. The tRNA molecule binds across the dimer.

It localises to the cytoplasm. The enzyme catalyses tRNA(Ser) + L-serine + ATP = L-seryl-tRNA(Ser) + AMP + diphosphate + H(+). The catalysed reaction is tRNA(Sec) + L-serine + ATP = L-seryl-tRNA(Sec) + AMP + diphosphate + H(+). It participates in aminoacyl-tRNA biosynthesis; selenocysteinyl-tRNA(Sec) biosynthesis; L-seryl-tRNA(Sec) from L-serine and tRNA(Sec): step 1/1. Catalyzes the attachment of serine to tRNA(Ser). Is also able to aminoacylate tRNA(Sec) with serine, to form the misacylated tRNA L-seryl-tRNA(Sec), which will be further converted into selenocysteinyl-tRNA(Sec). This is Serine--tRNA ligase from Pasteurella multocida (strain Pm70).